The chain runs to 241 residues: MAIDLVGQKIGMTRLISDDGSIMPVSVIKIEPNRIVQTRTIDIDGYRAIQVTTGKKVNKKGEAKVRRISAAIKGHYAKASQEIGLGLWEFKLEDNEITNATSIDISLFGAGHYVDVIGKSKGKGFQGGVKLHNFQMQDATHGNSISHRAIGSTGQCQEPGRVFKGKKMAGHMGNKQVTQECLKVVKVDIEKSVILVKGSIPGAIKGFVKVSLSPKKDNSNKEVSKNIKNQVTNEVDQTKQM.

N5-methylglutamine is present on glutamine 157.

It belongs to the universal ribosomal protein uL3 family. As to quaternary structure, part of the 50S ribosomal subunit. Forms a cluster with proteins L14 and L19. In terms of processing, methylated by PrmB.

In terms of biological role, one of the primary rRNA binding proteins, it binds directly near the 3'-end of the 23S rRNA, where it nucleates assembly of the 50S subunit. The chain is Large ribosomal subunit protein uL3 from Vesicomyosocius okutanii subsp. Calyptogena okutanii (strain HA).